Consider the following 255-residue polypeptide: Pyrroloquinoline-quinone synthase (255 aa).

The protein belongs to the PqqC family.

It catalyses the reaction 6-(2-amino-2-carboxyethyl)-7,8-dioxo-1,2,3,4,7,8-hexahydroquinoline-2,4-dicarboxylate + 3 O2 = pyrroloquinoline quinone + 2 H2O2 + 2 H2O + H(+). It functions in the pathway cofactor biosynthesis; pyrroloquinoline quinone biosynthesis. Functionally, ring cyclization and eight-electron oxidation of 3a-(2-amino-2-carboxyethyl)-4,5-dioxo-4,5,6,7,8,9-hexahydroquinoline-7,9-dicarboxylic-acid to PQQ. The chain is Pyrroloquinoline-quinone synthase from Granulibacter bethesdensis (strain ATCC BAA-1260 / CGDNIH1).